A 317-amino-acid chain; its full sequence is Acetyl-coenzyme A carboxylase carboxyl transferase subunit alpha (317 aa).

A CoA carboxyltransferase C-terminal domain is found at Arg39–Gly293.

The protein belongs to the AccA family. Acetyl-CoA carboxylase is a heterohexamer composed of biotin carboxyl carrier protein (AccB), biotin carboxylase (AccC) and two subunits each of ACCase subunit alpha (AccA) and ACCase subunit beta (AccD).

The protein localises to the cytoplasm. The catalysed reaction is N(6)-carboxybiotinyl-L-lysyl-[protein] + acetyl-CoA = N(6)-biotinyl-L-lysyl-[protein] + malonyl-CoA. It functions in the pathway lipid metabolism; malonyl-CoA biosynthesis; malonyl-CoA from acetyl-CoA: step 1/1. Component of the acetyl coenzyme A carboxylase (ACC) complex. First, biotin carboxylase catalyzes the carboxylation of biotin on its carrier protein (BCCP) and then the CO(2) group is transferred by the carboxyltransferase to acetyl-CoA to form malonyl-CoA. In Methylobacterium nodulans (strain LMG 21967 / CNCM I-2342 / ORS 2060), this protein is Acetyl-coenzyme A carboxylase carboxyl transferase subunit alpha.